The following is a 1569-amino-acid chain: MAEAKKPGPERISILGEANIIVDHGLWLNFVVDDLLQNTPTSTYVLITDTNLFDTYVPAFQAQFEAAAEGKATRLLTYTIPPGEASKSRETKAEIEDWMLSQQCTRDTVIIALGGGVMGDMIGYVAATFMRGVRFVQVPTTLLAMVDSSIGGKTAIDTPMGKNLVGAFWQPKRIYIDLAFLETLPVREFINGMAEVVKTAAIWNETEFTVLEESAAHILECVRSKGEGRLTPIKDVLKRIVIGSAGVKAEVVSSDEREGGLRNLLNFGHSIGHAIEAILTPQLLHGEAVAIGMVKEAELARYLGVLRPGAVARLVKCIASYDLPTSIHDKRVVKLTAGKKCPVDVLLQKMGVDKKNDGQKKKIVLLSAIGKCHEPRASVVDDKTIRTILSPSIQVTPGVPSNLDVTVTPPGSKSISNRALVLAALGLGSCRIKNLLHSDDTEYMLSAIHQLGGASYSWQDAGEVLVVDGKGGNLQASKEALYLGNAGTASRFLTTVVALCSPSESASSTILTGNARMKVRPIGPLVDALRSNGVEIEYQGKENSLPLRVDAAGGLKGGVIELAATVSSQYVSSILMAAPYAKNPVTLRLVGGKPISQPYIDMTISMMASFGVHVTASSDEPNTYHIPQGQYQNPSEYIIESDASSATYPLAIAAITGTTCTIPNIGSKSLQGDARFAVDVLQPMGCTVNQSDYSTTVTGPAPGELKGLPHVDMEPMTDAFLTASVLAAVASGKTQITGIANQRVKECNRIAAMKDQLAKFGVQCNELDDGIEVLGKGQDGGISAPTVGIHCYDDHRVAMSFSVLAVASPSPVIVTERECVGKTWPGWWDILSQAFKVDMIGHEPDANADEEDSKSSVMERSVFIIGMRGAGKTTAGNWMAKMLGWKFIDLDQELERRAGCTIPEMIRGSRGWEGFRADELSLLKDVMAKNSHGHIFSCGGGLVETPEARQLLKDYGRNGGNVLLIHRDTEQVVEYLMRDKTRPAYTSEIREVYLRRKDFYQECSNLLYYSPHSESSGSKSEIPCDFQQFVSSISGRSTHLKDVMEKDHSFFVSLTVPDVSEAASLIPEVVVGSDAVELRVDLLQDRSVDSVTRQVSILRALAKKPIVFTLRTVSQGGKFPDEAYEEGLELYRLALRMGMEYVDVEMTLPENIIQTVTESRGHSRIIASHHDPQGTMSWKNASWIPFYNRALQFGDIIKLVGVARSSEDNFDLAKFKSRMQEAQKTPMIAMNMGKAGKLSRVLNKFLTPVSHPALPFKAAPGQMSAAEIRRGLALLGDLDPCNFYLFGKPISASRSPALHNTLFGQTGLPHQYHRLETDNIQDVREVLQAPDFGGASVTIPLKLDVMGQVDELSEAARTIGAVNTVVPIGKADASDRRRLLGDNTDWRGMVHALRDEGVEEQADSETKGAAMVVGSGGTTRAAIFALHSLGFGPIYIAARNQAKVDALAADFPAEYQLQGLSQPSDADKVSSNLNVVISTIPADRPIDPSLQELVGALLSRPAVGTERRVLLEMAYKPSHTPIMQLADEAGNWTTVPGLEVLASQGWYQFELWTGITPLYRDARSAVLGL.

The interval 1-382 (MAEAKKPGPE…HEPRASVVDD (382 aa)) is 3-dehydroquinate synthase. NAD(+) is bound by residues 49 to 51 (DTN), 84 to 87 (EASK), 115 to 117 (GGV), and Asp120. Residue Arg131 coordinates 7-phospho-2-dehydro-3-deoxy-D-arabino-heptonate. 140–141 (TT) contacts NAD(+). 7-phospho-2-dehydro-3-deoxy-D-arabino-heptonate contacts are provided by Asp147 and Lys153. Lys162 is a binding site for NAD(+). Asn163 contacts 7-phospho-2-dehydro-3-deoxy-D-arabino-heptonate. NAD(+) contacts are provided by residues 180–183 (FLET) and Asn191. Glu195 contributes to the Zn(2+) binding site. 7-phospho-2-dehydro-3-deoxy-D-arabino-heptonate contacts are provided by residues 195-198 (EVVK) and Lys248. The active-site Proton acceptor; for 3-dehydroquinate synthase activity is the Glu258. Residues 262 to 266 (RNLLN) and His269 each bind 7-phospho-2-dehydro-3-deoxy-D-arabino-heptonate. His269 contributes to the Zn(2+) binding site. Catalysis depends on His273, which acts as the Proton acceptor; for 3-dehydroquinate synthase activity. 7-phospho-2-dehydro-3-deoxy-D-arabino-heptonate is bound by residues His285 and Lys354. His285 provides a ligand contact to Zn(2+). The segment at 395-837 (VTPGVPSNLD…WDILSQAFKV (443 aa)) is EPSP synthase. The active-site For EPSP synthase activity is the Cys819. Residues 859-1053 (ERSVFIIGMR…MEKDHSFFVS (195 aa)) are shikimate kinase. 866–873 (GMRGAGKT) lines the ATP pocket. Residues 1054 to 1267 (LTVPDVSEAA…AAPGQMSAAE (214 aa)) form a 3-dehydroquinase region. His1170 acts as the Proton acceptor; for 3-dehydroquinate dehydratase activity in catalysis. Catalysis depends on Lys1198, which acts as the Schiff-base intermediate with substrate; for 3-dehydroquinate dehydratase activity. Residues 1280-1569 (PCNFYLFGKP…RDARSAVLGL (290 aa)) are shikimate dehydrogenase.

It in the N-terminal section; belongs to the sugar phosphate cyclases superfamily. Dehydroquinate synthase family. The protein in the 2nd section; belongs to the EPSP synthase family. This sequence in the 3rd section; belongs to the shikimate kinase family. In the 4th section; belongs to the type-I 3-dehydroquinase family. It in the C-terminal section; belongs to the shikimate dehydrogenase family. As to quaternary structure, homodimer. Requires Zn(2+) as cofactor.

The protein resides in the cytoplasm. It carries out the reaction 7-phospho-2-dehydro-3-deoxy-D-arabino-heptonate = 3-dehydroquinate + phosphate. The catalysed reaction is 3-dehydroquinate = 3-dehydroshikimate + H2O. The enzyme catalyses shikimate + NADP(+) = 3-dehydroshikimate + NADPH + H(+). It catalyses the reaction shikimate + ATP = 3-phosphoshikimate + ADP + H(+). It carries out the reaction 3-phosphoshikimate + phosphoenolpyruvate = 5-O-(1-carboxyvinyl)-3-phosphoshikimate + phosphate. It participates in metabolic intermediate biosynthesis; chorismate biosynthesis; chorismate from D-erythrose 4-phosphate and phosphoenolpyruvate: step 2/7. It functions in the pathway metabolic intermediate biosynthesis; chorismate biosynthesis; chorismate from D-erythrose 4-phosphate and phosphoenolpyruvate: step 3/7. The protein operates within metabolic intermediate biosynthesis; chorismate biosynthesis; chorismate from D-erythrose 4-phosphate and phosphoenolpyruvate: step 4/7. Its pathway is metabolic intermediate biosynthesis; chorismate biosynthesis; chorismate from D-erythrose 4-phosphate and phosphoenolpyruvate: step 5/7. It participates in metabolic intermediate biosynthesis; chorismate biosynthesis; chorismate from D-erythrose 4-phosphate and phosphoenolpyruvate: step 6/7. Its function is as follows. The AROM polypeptide catalyzes 5 consecutive enzymatic reactions in prechorismate polyaromatic amino acid biosynthesis. In Fusarium vanettenii (strain ATCC MYA-4622 / CBS 123669 / FGSC 9596 / NRRL 45880 / 77-13-4) (Fusarium solani subsp. pisi), this protein is Pentafunctional AROM polypeptide.